The sequence spans 160 residues: Ribosomal RNA large subunit methyltransferase H (160 aa).

Residues L77, G109, and 128 to 133 each bind S-adenosyl-L-methionine; that span reads FSRMTF.

This sequence belongs to the RNA methyltransferase RlmH family. Homodimer.

It localises to the cytoplasm. It catalyses the reaction pseudouridine(1915) in 23S rRNA + S-adenosyl-L-methionine = N(3)-methylpseudouridine(1915) in 23S rRNA + S-adenosyl-L-homocysteine + H(+). Its function is as follows. Specifically methylates the pseudouridine at position 1915 (m3Psi1915) in 23S rRNA. The polypeptide is Ribosomal RNA large subunit methyltransferase H (Pelotomaculum thermopropionicum (strain DSM 13744 / JCM 10971 / SI)).